A 146-amino-acid chain; its full sequence is Angiogenin (146 aa).

Residues Met1 to Ala24 form the signal peptide. The residue at position 25 (Gln25) is a Pyrrolidone carboxylic acid. His37 acts as the Proton acceptor in catalysis. 3 disulfide bridges follow: Cys50-Cys105, Cys63-Cys116, and Cys81-Cys131. A Nucleolar localization signal motif is present at residues Arg55–Met59. 2 residues coordinate tRNA: Cys105 and Val127. His138 functions as the Proton donor in the catalytic mechanism.

This sequence belongs to the pancreatic ribonuclease family. As to quaternary structure, homodimer. Interacts with RNH1; inhibiting ANG ribonuclease activity. Interacts with PCNA.

It is found in the secreted. It localises to the nucleus. The protein resides in the nucleolus. Its subcellular location is the cytoplasm. The protein localises to the stress granule. Has weak tRNA ribonuclease activity by itself due to partial autoinhibition by its C-terminus, which folds into a short alpha-helix that partially occludes the substrate-binding site. In absence of stress, the ribonuclease activity is inhibited by RNH1 in the cytoplasm. In response to stress, dissociates from RNH1 in the cytoplasm and associates with cytoplasmic ribosomes with vacant A-sites: ribosomes directly activate the tRNA ribonuclease activity of ANG by refolding the C-terminal alpha-helix. In response to stress, the angiogenic activity of ANG is inhibited by RNH1 in the nucleus. Functionally, secreted ribonuclease that can either promote or restrict cell proliferation of target cells, depending on the context. Endocytosed in target cells via its receptor PLXNB2 and translocates to the cytoplasm or nucleus. Under stress conditions, localizes to the cytoplasm and promotes the assembly of stress granules (SGs): specifically cleaves a subset of tRNAs within anticodon loops to produce tRNA-derived stress-induced fragments (tiRNAs), resulting in translation repression and inhibition of cell proliferation. tiRNas also prevent formation of apoptosome, thereby promoting cell survival. Preferentially cleaves RNAs between a pyrimidine and an adenosine residue, suggesting that it cleaves the anticodon loop of tRNA(Ala) (32-UUAGCAU-38) after positions 33 and 36. Cleaves a subset of tRNAs, including tRNA(Ala), tRNA(Glu), tRNA(Gly), tRNA(Lys), tRNA(Val), tRNA(His), tRNA(Asp) and tRNA(Sec). Under growth conditions and in differentiated cells, translocates to the nucleus and stimulates ribosomal RNA (rRNA) transcription, including that containing the initiation site sequences of 45S rRNA, thereby promoting cell growth and proliferation. Angiogenin induces vascularization of normal and malignant tissues via its ability to promote rRNA transcription. Involved in hematopoietic stem and progenitor cell (HSPC) growth and survival by promoting rRNA transcription in growth conditions and inhibiting translation in response to stress, respectively. Mediates the crosstalk between myeloid and intestinal epithelial cells to protect the intestinal epithelial barrier integrity: secreted by myeloid cells and promotes intestinal epithelial cells proliferation and survival. Also mediates osteoclast-endothelial cell crosstalk in growing bone: produced by osteoclasts and protects the neighboring vascular cells against senescence by promoting rRNA transcription. The polypeptide is Angiogenin (ANG) (Saguinus oedipus (Cotton-top tamarin)).